Here is a 215-residue protein sequence, read N- to C-terminus: Large ribosomal subunit protein uL3 (215 aa).

Glutamine 151 is modified (N5-methylglutamine).

The protein belongs to the universal ribosomal protein uL3 family. As to quaternary structure, part of the 50S ribosomal subunit. Forms a cluster with proteins L14 and L19. Methylated by PrmB.

Its function is as follows. One of the primary rRNA binding proteins, it binds directly near the 3'-end of the 23S rRNA, where it nucleates assembly of the 50S subunit. This is Large ribosomal subunit protein uL3 from Rickettsia bellii (strain OSU 85-389).